A 530-amino-acid polypeptide reads, in one-letter code: UDP-glucuronosyltransferase 1A8 (530 aa).

Residues 1–25 form the signal peptide; the sequence is MAPSGCPPSLPLCVCLFLASGFAQA. N-linked (GlcNAc...) asparagine glycans are attached at residues Asn-71, Asn-292, and Asn-430. The chain crosses the membrane as a helical span at residues 488 to 504; sequence VIGFLLAIVLTVVFIVY.

It belongs to the UDP-glycosyltransferase family. Homodimers. Homooligomer. Interacts with UGT1A1, UGT1A3, UGT1A4, UGT1A6, UGT1A7, UGT1A8, UGT1A9 and UGT1A10 to form heterodimers.

The protein localises to the endoplasmic reticulum membrane. It catalyses the reaction glucuronate acceptor + UDP-alpha-D-glucuronate = acceptor beta-D-glucuronoside + UDP + H(+). The catalysed reaction is 17beta-estradiol + UDP-alpha-D-glucuronate = 17beta-estradiol 3-O-(beta-D-glucuronate) + UDP + H(+). The enzyme catalyses 17alpha-estradiol + UDP-alpha-D-glucuronate = 17alpha-estradiol 3-O-(beta-D-glucuronate) + UDP + H(+). It carries out the reaction estrone + UDP-alpha-D-glucuronate = estrone 3-O-(beta-D-glucuronate) + UDP + H(+). It catalyses the reaction 16alpha,17alpha-estriol + UDP-alpha-D-glucuronate = 16alpha,17alpha-estriol 3-O-(beta-D-glucuronate) + UDP + H(+). The catalysed reaction is 2-hydroxy-17beta-estradiol + UDP-alpha-D-glucuronate = 2-hydroxy-17beta-estradiol 3-O-(beta-D-glucuronate) + UDP + H(+). The enzyme catalyses 2-hydroxy-17beta-estradiol + UDP-alpha-D-glucuronate = 17beta-estradiol 2-O-(beta-D-glucuronate) + UDP + H(+). It carries out the reaction 2-hydroxyestrone + UDP-alpha-D-glucuronate = 2-hydroxyestrone 3-O-(beta-D-glucuronate) + UDP + H(+). It catalyses the reaction 4-hydroxy-17beta-estradiol + UDP-alpha-D-glucuronate = 4-hydroxy-17beta-estradiol 3-O-(beta-D-glucuronate) + UDP + H(+). The catalysed reaction is 4-hydroxy-17beta-estradiol + UDP-alpha-D-glucuronate = 17beta-estradiol 4-O-(beta-D-glucuronate) + UDP + H(+). The enzyme catalyses 4-hydroxyestrone + UDP-alpha-D-glucuronate = 4-hydroxyestrone 3-O-(beta-D-glucuronate) + UDP + H(+). It carries out the reaction 4-hydroxyestrone + UDP-alpha-D-glucuronate = estrone 4-O-(beta-D-glucuronate) + UDP + H(+). It catalyses the reaction 2-methoxy-17beta-estradiol + UDP-alpha-D-glucuronate = 2-methoxy-17beta-estradiol 3-O-(beta-D-glucuronate) + UDP + H(+). The catalysed reaction is 2-methoxyestrone + UDP-alpha-D-glucuronate = 2-methoxyestrone 3-O-(beta-D-glucuronate) + UDP + H(+). The enzyme catalyses 4-methoxy-17beta-estradiol + UDP-alpha-D-glucuronate = 4-methoxy-17beta-estradiol 3-O-(beta-D-glucuronate) + UDP + H(+). It carries out the reaction 4-methoxyestrone + UDP-alpha-D-glucuronate = 4-methoxyestrone 3-O-(beta-D-glucuronate) + UDP + H(+). It catalyses the reaction 17beta-hydroxy-5alpha-androstan-3-one + UDP-alpha-D-glucuronate = 5alpha-dihydrotestosterone 17-O-(beta-D-glucuronate) + UDP + H(+). The catalysed reaction is 5alpha-dihydrotestosterone 17-O-(beta-D-glucuronate) + UDP-alpha-D-glucuronate = 5alpha-dihydrotestosterone 17-O-[beta-D-glucuronosyl-(1-&gt;2)-glucuronate] + UDP + H(+). The enzyme catalyses prunetin + UDP-alpha-D-glucuronate = prunetin-4'-O-beta-D-glucuronide + UDP. It carries out the reaction prunetin + UDP-alpha-D-glucuronate = prunetin-5-O-beta-D-glucuronide + UDP. It catalyses the reaction (E)-ferulate + UDP-alpha-D-glucuronate = (E)-4-O-(beta-D-glucuronosyl)-ferulate + UDP + H(+). The catalysed reaction is (E)-ferulate + UDP-alpha-D-glucuronate = (E)-ferulic acid beta-D-glucuronate ester + UDP. The enzyme catalyses candesartan + UDP-alpha-D-glucuronate = candesartan O-beta-D-glucuronoside + UDP. It carries out the reaction mycophenolate + UDP-alpha-D-glucuronate = mycophenolate 7-O-beta-D-glucuronide + UDP + H(+). UDP-glucuronosyltransferase (UGT) that catalyzes phase II biotransformation reactions in which lipophilic substrates are conjugated with glucuronic acid to increase the metabolite's water solubility, thereby facilitating excretion into either the urine or bile. Essential for the elimination and detoxification of drugs, xenobiotics and endogenous compounds. Catalyzes the glucuronidation of endogenous steroid hormones such as androgens and estrogens. Produces dihydrotestosterone (DHT) diglucuronide from the DHT after two subsequent glucoronidation steps. Involved in the glucuronidation of the phytochemical ferulic acid at the phenolic or the carboxylic acid group. Also catalyzes the glucuronidation of the isoflavones genistein, daidzein, glycitein, formononetin, biochanin A and prunetin, which are phytoestrogens with anticancer and cardiovascular properties. Involved in the glucuronidation of the AGTR1 angiotensin receptor antagonist caderastan, a drug which can inhibit the effect of angiotensin II. Also metabolizes mycophenolate, an immunosuppressive agent. This Rattus norvegicus (Rat) protein is UDP-glucuronosyltransferase 1A8.